The primary structure comprises 164 residues: Succinate dehydrogenase assembly factor 3, mitochondrial (164 aa).

The transit peptide at 1-51 (MRPTLLRLANASGPLPLSVSQASVQLIPPIPLYRRLLRAHRLLPVDMRYMG) directs the protein to the mitochondrion. The span at 136 to 145 (KSPEQIEREA) shows a compositional bias: basic and acidic residues. The tract at residues 136 to 164 (KSPEQIEREANSAGVSPVNPNDPTTAGNS) is disordered. The span at 153-164 (VNPNDPTTAGNS) shows a compositional bias: polar residues.

This sequence belongs to the complex I LYR family. SDHAF3 subfamily. In terms of assembly, interacts with the iron-sulfur protein subunit within the SDH catalytic dimer.

The protein resides in the mitochondrion matrix. In terms of biological role, plays an essential role in the assembly of succinate dehydrogenase (SDH), an enzyme complex (also referred to as respiratory complex II) that is a component of both the tricarboxylic acid (TCA) cycle and the mitochondrial electron transport chain, and which couples the oxidation of succinate to fumarate with the reduction of ubiquinone (coenzyme Q) to ubiquinol. Promotes maturation of the iron-sulfur protein subunit of the SDH catalytic dimer, protecting it from the deleterious effects of oxidants. May act together with SDHAF1. This is Succinate dehydrogenase assembly factor 3, mitochondrial from Cryptococcus neoformans var. neoformans serotype D (strain B-3501A) (Filobasidiella neoformans).